A 185-amino-acid polypeptide reads, in one-letter code: HTH-type transcriptional regulator Hpr (185 aa).

One can recognise an HTH marR-type domain in the interval 13–157; the sequence is AMIFSQRIAQ…LIAILRNIYG (145 aa). A DNA-binding region (H-T-H motif) is located at residues 63–86; the sequence is ISEIAKFGVMHVSTAFNFSKKLEE.

In terms of assembly, homodimer.

Its function is as follows. Negative regulator of protease production and sporulation. The polypeptide is HTH-type transcriptional regulator Hpr (Bacillus mycoides (strain KBAB4) (Bacillus weihenstephanensis)).